Here is a 72-residue protein sequence, read N- to C-terminus: DNA-directed RNA polymerase subunit omega (72 aa).

The protein belongs to the RNA polymerase subunit omega family. The RNAP catalytic core consists of 2 alpha, 1 beta, 1 beta' and 1 omega subunit. When a sigma factor is associated with the core the holoenzyme is formed, which can initiate transcription.

The catalysed reaction is RNA(n) + a ribonucleoside 5'-triphosphate = RNA(n+1) + diphosphate. Promotes RNA polymerase assembly. Latches the N- and C-terminal regions of the beta' subunit thereby facilitating its interaction with the beta and alpha subunits. The chain is DNA-directed RNA polymerase subunit omega from Clostridium beijerinckii (strain ATCC 51743 / NCIMB 8052) (Clostridium acetobutylicum).